The primary structure comprises 428 residues: Histidinol dehydrogenase (428 aa).

NAD(+) contacts are provided by Tyr-124, Gln-186, and Asn-209. Substrate is bound by residues Ser-233, Gln-255, and His-258. Gln-255 and His-258 together coordinate Zn(2+). Catalysis depends on proton acceptor residues Glu-322 and His-323. Substrate contacts are provided by His-323, Asp-356, Glu-410, and His-415. Asp-356 lines the Zn(2+) pocket. His-415 lines the Zn(2+) pocket.

It belongs to the histidinol dehydrogenase family. Zn(2+) is required as a cofactor.

It catalyses the reaction L-histidinol + 2 NAD(+) + H2O = L-histidine + 2 NADH + 3 H(+). It participates in amino-acid biosynthesis; L-histidine biosynthesis; L-histidine from 5-phospho-alpha-D-ribose 1-diphosphate: step 9/9. Functionally, catalyzes the sequential NAD-dependent oxidations of L-histidinol to L-histidinaldehyde and then to L-histidine. This chain is Histidinol dehydrogenase, found in Bacteroides fragilis (strain ATCC 25285 / DSM 2151 / CCUG 4856 / JCM 11019 / LMG 10263 / NCTC 9343 / Onslow / VPI 2553 / EN-2).